Here is a 995-residue protein sequence, read N- to C-terminus: Polynucleotide 5'-hydroxyl-kinase NOL9 (995 aa).

2 disordered regions span residues 18 to 173 (EQRE…SSMK) and 271 to 359 (IKVF…YEPP). Composition is skewed to low complexity over residues 75-94 (TAGA…SSPS) and 110-129 (VNKS…KSAK). The span at 279 to 354 (EETDSDEDDI…DIFDTDDLDS (76 aa)) shows a compositional bias: acidic residues. 639 to 646 (GGKGVGKS) contributes to the ATP binding site.

Belongs to the Clp1 family. NOL9/GRC3 subfamily.

It is found in the nucleus. It localises to the nucleolus. In terms of biological role, polynucleotide 5'-kinase involved in rRNA processing. In Drosophila melanogaster (Fruit fly), this protein is Polynucleotide 5'-hydroxyl-kinase NOL9.